A 287-amino-acid chain; its full sequence is Bifunctional protein FolD (287 aa).

Residues 160-162 (GRS), Ser-189, and Thr-230 each bind NADP(+).

Belongs to the tetrahydrofolate dehydrogenase/cyclohydrolase family. Homodimer.

It catalyses the reaction (6R)-5,10-methylene-5,6,7,8-tetrahydrofolate + NADP(+) = (6R)-5,10-methenyltetrahydrofolate + NADPH. The catalysed reaction is (6R)-5,10-methenyltetrahydrofolate + H2O = (6R)-10-formyltetrahydrofolate + H(+). Its pathway is one-carbon metabolism; tetrahydrofolate interconversion. Catalyzes the oxidation of 5,10-methylenetetrahydrofolate to 5,10-methenyltetrahydrofolate and then the hydrolysis of 5,10-methenyltetrahydrofolate to 10-formyltetrahydrofolate. In Chlamydia trachomatis serovar D (strain ATCC VR-885 / DSM 19411 / UW-3/Cx), this protein is Bifunctional protein FolD.